The sequence spans 127 residues: Promotilin (127 aa).

Residues 1 to 25 (MLSRKAVAALLLVHVTAMLASQTEG) form the signal peptide. The interval 41–67 (REQNKRLRKSLRVQQRSKAAGRLEPQE) is disordered.

It belongs to the motilin family. As to expression, present in the gut mucosa with the exception of the gastric corpus. Also present in medulla oblongata, nucleus of the solitary tract, hypophysis, spinal cord, hypothalamus, and cerebellum but not in the cerebral cortex.

The protein localises to the secreted. Functionally, plays an important role in the regulation of interdigestive gastrointestinal motility and indirectly causes rhythmic contraction of duodenal and colonic smooth muscle. In Cavia porcellus (Guinea pig), this protein is Promotilin (MLN).